Reading from the N-terminus, the 383-residue chain is Beta-1,3-galactosyltransferase 4 (383 aa).

Residues methionine 1–arginine 8 lie on the Cytoplasmic side of the membrane. The chain crosses the membrane as a helical span at residues leucine 9–glycine 29. At glutamate 30–serine 383 the chain is on the lumenal side. N-linked (GlcNAc...) asparagine glycosylation occurs at asparagine 149.

The protein belongs to the glycosyltransferase 31 family.

Its subcellular location is the golgi apparatus membrane. It catalyses the reaction a ganglioside GM2 (d18:1(4E)) + UDP-alpha-D-galactose = a ganglioside GM1 (d18:1(4E)) + UDP + H(+). The catalysed reaction is a ganglioside GM2 + UDP-alpha-D-galactose = a ganglioside GM1 + UDP + H(+). The enzyme catalyses a ganglioside GD2 (d18:1(4E)) + UDP-alpha-D-galactose = a ganglioside GD1b (d18:1(4E)) + UDP + H(+). It carries out the reaction a ganglioside GA2 (d18:1(4E)) + UDP-alpha-D-galactose = a ganglioside GA1 (d18:1(4E)) + UDP + H(+). It functions in the pathway protein modification; protein glycosylation. Involved in GM1/GD1B/GA1 ganglioside biosynthesis. The chain is Beta-1,3-galactosyltransferase 4 (B3GALT4) from Canis lupus familiaris (Dog).